Here is a 606-residue protein sequence, read N- to C-terminus: Endonuclease 8-like 3 (606 aa).

Val-2 functions as the Schiff-base intermediate with DNA; via amino nitrogen in the catalytic mechanism. DNA-binding residues include Asn-193 and Arg-272. The FPG-type zinc finger occupies Lys-248–Lys-282. The segment at Ser-318–Leu-347 adopts a RanBP2-type zinc-finger fold. Ser-451 is modified (phosphoserine). Polar residues predominate over residues Lys-479 to Arg-494. The segment at Lys-479–Pro-506 is disordered. Residues Cys-508, His-511, Cys-534, Cys-542, Cys-555, His-557, Cys-580, and Cys-588 each coordinate Zn(2+). GRF-type zinc fingers lie at residues Cys-508–Ser-551 and Cys-555–Gly-597.

This sequence belongs to the FPG family. As to expression, expressed in testis, thymus, spleen and bone marrow. In young mice, expressed at higher levels in thymocytes than splenocytes. At 12 dpc, abundant in the subventricular zone (SVZ) of the lateral ventricles. At 17.5 dpc and P0, expression is limited to distinct cells in the cortical SVZ, in cells of the secondary matrix, the dentate gyrus migratory route and the dentate gyrus.

The protein localises to the nucleus. Its subcellular location is the chromosome. The enzyme catalyses 2'-deoxyribonucleotide-(2'-deoxyribose 5'-phosphate)-2'-deoxyribonucleotide-DNA = a 3'-end 2'-deoxyribonucleotide-(2,3-dehydro-2,3-deoxyribose 5'-phosphate)-DNA + a 5'-end 5'-phospho-2'-deoxyribonucleoside-DNA + H(+). Its function is as follows. DNA glycosylase which prefers single-stranded DNA (ssDNA), or partially ssDNA structures such as bubble and fork structures, to double-stranded DNA (dsDNA). Mediates interstrand cross-link repair in response to replication stress: acts by mediating DNA glycosylase activity, cleaving one of the two N-glycosyl bonds comprising the interstrand cross-link, which avoids the formation of a double-strand break but generates an abasic site that is bypassed by translesion synthesis polymerases. In vitro, displays strong glycosylase activity towards the hydantoin lesions spiroiminodihydantoin (Sp) and guanidinohydantoin (Gh) in both ssDNA and dsDNA; also recognizes FapyA, FapyG, 5-OHU, 5-OHC, 5-OHMH, Tg and 8-oxoA lesions in ssDNA. No activity on 8-oxoG detected. Also shows weak DNA-(apurinic or apyrimidinic site) lyase activity. In vivo, appears to be the primary enzyme involved in removing Sp and Gh from ssDNA in neonatal tissues. The protein is Endonuclease 8-like 3 (Neil3) of Mus musculus (Mouse).